The primary structure comprises 131 residues: Phosphoribosyl-AMP cyclohydrolase (131 aa).

Asp82 contacts Mg(2+). Residue Cys83 participates in Zn(2+) binding. Mg(2+) contacts are provided by Asp84 and Asp86. The Zn(2+) site is built by Cys99 and Cys106.

The protein belongs to the PRA-CH family. As to quaternary structure, homodimer. Requires Mg(2+) as cofactor. Zn(2+) serves as cofactor.

Its subcellular location is the cytoplasm. It carries out the reaction 1-(5-phospho-beta-D-ribosyl)-5'-AMP + H2O = 1-(5-phospho-beta-D-ribosyl)-5-[(5-phospho-beta-D-ribosylamino)methylideneamino]imidazole-4-carboxamide. It participates in amino-acid biosynthesis; L-histidine biosynthesis; L-histidine from 5-phospho-alpha-D-ribose 1-diphosphate: step 3/9. Catalyzes the hydrolysis of the adenine ring of phosphoribosyl-AMP. The sequence is that of Phosphoribosyl-AMP cyclohydrolase from Methanospirillum hungatei JF-1 (strain ATCC 27890 / DSM 864 / NBRC 100397 / JF-1).